We begin with the raw amino-acid sequence, 401 residues long: Glucose/mannose transporter GlcP (401 aa).

A run of 12 helical transmembrane segments spans residues 11–31 (AFFF…PFLL), 43–63 (VIIF…PLMI), 78–98 (IMLV…IIVM), 99–119 (AFLL…FVIA), 132–152 (EVLF…FIDI), 156–176 (FLPY…WLIF), 212–232 (LGFF…FANF), 247–267 (LISV…IGFV), 278–298 (LFSC…SNPI), 306–326 (LIGL…SIII), 336–356 (LFIA…GWSL), and 360–380 (TILL…GISV).

Belongs to the major facilitator superfamily.

The protein resides in the cell membrane. Functionally, can transport glucose, mannose, 2-deoxyglucose and methyl alpha-glucoside, but not galactose. In Bacillus subtilis (strain 168), this protein is Glucose/mannose transporter GlcP (glcP).